Reading from the N-terminus, the 454-residue chain is Maintenance of mitochondrial morphology protein 1 (454 aa).

Topologically, residues 1-117 are lumenal; the sequence is MESNYTGMDG…SFSSWSFAQG (117 aa). Residues 118–138 form a helical membrane-spanning segment; the sequence is LIVGQVSVVLVLIFFIKFFIF. Residues 139–454 lie on the Cytoplasmic side of the membrane; the sequence is SDSSTKTNPN…ESEPGRETHY (316 aa). A disordered region spans residues 144 to 164; sequence KTNPNPAKNSSSTNSLSGLSS. Over residues 153-164 the composition is skewed to low complexity; sequence SSSTNSLSGLSS. Residues 215–427 enclose the SMP-LTD domain; it reads PAESLDWFNV…EPRFQFIKLP (213 aa). The a 1,2-diacyl-sn-glycero-3-phosphate site is built by Arg-253, Trp-411, Arg-415, Trp-430, Arg-432, and Ser-433. The interval 434-454 is disordered; the sequence is KNTREGKADVDESEPGRETHY. Residues 435–454 are compositionally biased toward basic and acidic residues; that stretch reads NTREGKADVDESEPGRETHY.

The protein belongs to the MMM1 family. In terms of assembly, homodimer. Component of the ER-mitochondria encounter structure (ERMES) or MDM complex, composed of MMM1, MDM10, MDM12 and MDM34. An MMM1 homodimer associates with one molecule of MDM12 on each side in a pairwise head-to-tail manner, and the SMP-LTD domains of MMM1 and MDM12 generate a continuous hydrophobic tunnel for phospholipid trafficking.

It localises to the endoplasmic reticulum membrane. Component of the ERMES/MDM complex, which serves as a molecular tether to connect the endoplasmic reticulum (ER) and mitochondria. Components of this complex are involved in the control of mitochondrial shape and protein biogenesis, and function in nonvesicular lipid trafficking between the ER and mitochondria. Preferentially binds to glycerophospholipids such as phosphatidylcholoine (PC), phosphatidic acid (PA), phosphatidylglycerol (PG), and phosphatidylserine (PS), but not to phosphatidylethanolamine (PE). The MDM12-MMM1 subcomplex functions in the major beta-barrel assembly pathway that is responsible for biogenesis of all outer membrane beta-barrel proteins, and acts in a late step after the SAM complex. The MDM10-MDM12-MMM1 subcomplex further acts in the TOM40-specific pathway after the action of the MDM12-MMM1 complex. Essential for establishing and maintaining the structure of mitochondria and maintenance of mtDNA nucleoids. This Zygosaccharomyces rouxii (strain ATCC 2623 / CBS 732 / NBRC 1130 / NCYC 568 / NRRL Y-229) protein is Maintenance of mitochondrial morphology protein 1.